Consider the following 450-residue polypeptide: Glutamate-1-semialdehyde 2,1-aminomutase (450 aa).

At lysine 262 the chain carries N6-(pyridoxal phosphate)lysine.

This sequence belongs to the class-III pyridoxal-phosphate-dependent aminotransferase family. HemL subfamily. In terms of assembly, homodimer. The cofactor is pyridoxal 5'-phosphate.

The protein resides in the cytoplasm. It catalyses the reaction (S)-4-amino-5-oxopentanoate = 5-aminolevulinate. The protein operates within porphyrin-containing compound metabolism; protoporphyrin-IX biosynthesis; 5-aminolevulinate from L-glutamyl-tRNA(Glu): step 2/2. This chain is Glutamate-1-semialdehyde 2,1-aminomutase, found in Campylobacter hominis (strain ATCC BAA-381 / DSM 21671 / CCUG 45161 / LMG 19568 / NCTC 13146 / CH001A).